The chain runs to 346 residues: Biotin synthase (346 aa).

Residues 38–256 (RQVQVSTLLS…IAVARIMMPT (219 aa)) enclose the Radical SAM core domain. [4Fe-4S] cluster-binding residues include Cys-53, Cys-57, and Cys-60. [2Fe-2S] cluster is bound by residues Cys-97, Cys-128, Cys-188, and Arg-260.

It belongs to the radical SAM superfamily. Biotin synthase family. Homodimer. [4Fe-4S] cluster serves as cofactor. Requires [2Fe-2S] cluster as cofactor.

The enzyme catalyses (4R,5S)-dethiobiotin + (sulfur carrier)-SH + 2 reduced [2Fe-2S]-[ferredoxin] + 2 S-adenosyl-L-methionine = (sulfur carrier)-H + biotin + 2 5'-deoxyadenosine + 2 L-methionine + 2 oxidized [2Fe-2S]-[ferredoxin]. It functions in the pathway cofactor biosynthesis; biotin biosynthesis; biotin from 7,8-diaminononanoate: step 2/2. Functionally, catalyzes the conversion of dethiobiotin (DTB) to biotin by the insertion of a sulfur atom into dethiobiotin via a radical-based mechanism. The chain is Biotin synthase from Pseudescherichia vulneris (Escherichia vulneris).